The sequence spans 146 residues: Urease accessory protein UreE 1 (146 aa).

This sequence belongs to the UreE family.

The protein resides in the cytoplasm. Functionally, involved in urease metallocenter assembly. Binds nickel. Probably functions as a nickel donor during metallocenter assembly. In Pseudomonas syringae pv. tomato (strain ATCC BAA-871 / DC3000), this protein is Urease accessory protein UreE 1.